The chain runs to 554 residues: MLO-like protein 14 (554 aa).

The Extracellular segment spans residues 1–13; it reads MREETEPSERTLG. A helical transmembrane segment spans residues 14–34; that stretch reads LTPTWSVATVLTIFVFVSLIV. The Cytoplasmic portion of the chain corresponds to 35–63; the sequence is ERSIHRLSNWLQKTKRKPLFAALEKMKEE. The helical transmembrane segment at 64-84 threads the bilayer; it reads LMLLGFISLLLTATSSTIANI. Topologically, residues 85-158 are extracellular; that stretch reads CVSSSFHNDR…SYEGMEQLHR (74 aa). The chain crosses the membrane as a helical span at residues 159-179; the sequence is FIFIMAVTHVTYSCLTMLLAI. The Cytoplasmic segment spans residues 180–281; the sequence is VKIHRWRIWE…MIRSMEEEFQ (102 aa). A helical transmembrane segment spans residues 282 to 302; it reads KIVGVSGPLWGFVVGFMLFNI. Residue K303 is a topological domain, extracellular. A helical membrane pass occupies residues 304 to 324; that stretch reads GSNLYFWLAIIPITLVLLVGA. Topologically, residues 325 to 366 are cytoplasmic; it reads KLQHVIATLALENASITEYASGIKLRPRDELFWFKKPELLLS. Residues 367–387 form a helical membrane-spanning segment; that stretch reads LIHFIQFQNAFELASFFWFWW. Topologically, residues 388 to 406 are extracellular; the sequence is QFGYNSCFLRNHLLVYLRL. Residues 407–427 traverse the membrane as a helical segment; sequence ILGFSGQFLCSYSTLPLYALV. At 428–554 the chain is on the cytoplasmic side; sequence TQMGTNYKAA…SSSLPMRREC (127 aa). Positions 441 to 462 are calmodulin-binding; sequence QRVRETINGWGKATRRKRRHGL.

It belongs to the MLO family.

It is found in the membrane. Its function is as follows. May be involved in modulation of pathogen defense and leaf cell death. Activity seems to be regulated by Ca(2+)-dependent calmodulin binding and seems not to require heterotrimeric G proteins. The polypeptide is MLO-like protein 14 (MLO14) (Arabidopsis thaliana (Mouse-ear cress)).